A 277-amino-acid chain; its full sequence is 3-methyl-2-oxobutanoate hydroxymethyltransferase (277 aa).

Mg(2+) is bound by residues Asp-53 and Asp-96. Residues 53 to 54, Asp-96, and Lys-126 each bind 3-methyl-2-oxobutanoate; that span reads DS. Residue Glu-128 participates in Mg(2+) binding. Glu-195 (proton acceptor) is an active-site residue.

The protein belongs to the PanB family. As to quaternary structure, homodecamer; pentamer of dimers. The cofactor is Mg(2+).

Its subcellular location is the cytoplasm. It carries out the reaction 3-methyl-2-oxobutanoate + (6R)-5,10-methylene-5,6,7,8-tetrahydrofolate + H2O = 2-dehydropantoate + (6S)-5,6,7,8-tetrahydrofolate. It functions in the pathway cofactor biosynthesis; (R)-pantothenate biosynthesis; (R)-pantoate from 3-methyl-2-oxobutanoate: step 1/2. Catalyzes the reversible reaction in which hydroxymethyl group from 5,10-methylenetetrahydrofolate is transferred onto alpha-ketoisovalerate to form ketopantoate. The sequence is that of 3-methyl-2-oxobutanoate hydroxymethyltransferase from Chlorobium phaeobacteroides (strain BS1).